We begin with the raw amino-acid sequence, 308 residues long: Transcription factor JunB (308 aa).

A basic motif region spans residues 229–256; sequence RIKAERKRLRNRLAATKCRKRKLERISR. In terms of domain architecture, bZIP spans 229–292; sequence RIKAERKRLR…AQLKQKVLRH (64 aa). A leucine-zipper region spans residues 257 to 285; that stretch reads LEEKVKVLKNDNAGLSNTASVLRDQVAQL.

The protein belongs to the bZIP family. Jun subfamily. In terms of assembly, binds DNA as a homodimer or as a heterodimer with another member of the jun/fos family.

It is found in the nucleus. Transcription factor involved in regulating gene activity following the primary growth factor response. Binds to the DNA sequence 5'-TGA[CG]TCA-3'. This chain is Transcription factor JunB (junb), found in Cyprinus carpio (Common carp).